The following is a 207-amino-acid chain: Adenylyl-sulfate kinase (207 aa).

34 to 41 (GLSGSGKS) lines the ATP pocket. Ser-108 functions as the Phosphoserine intermediate in the catalytic mechanism.

Belongs to the APS kinase family.

The catalysed reaction is adenosine 5'-phosphosulfate + ATP = 3'-phosphoadenylyl sulfate + ADP + H(+). The protein operates within sulfur metabolism; hydrogen sulfide biosynthesis; sulfite from sulfate: step 2/3. Catalyzes the synthesis of activated sulfate. This chain is Adenylyl-sulfate kinase, found in Lactiplantibacillus plantarum (strain ATCC BAA-793 / NCIMB 8826 / WCFS1) (Lactobacillus plantarum).